A 181-amino-acid chain; its full sequence is S-fimbrial protein subunit SfaA (181 aa).

An N-terminal signal peptide occupies residues 1-24; sequence MKLKFISMAVFSALTLGVATNASA. Cys44 and Cys84 are disulfide-bonded.

This sequence belongs to the fimbrial protein family.

It localises to the fimbrium. Its function is as follows. Fimbriae (also called pili), polar filaments radiating from the surface of the bacterium to a length of 0.5-1.5 micrometers and numbering 100-300 per cell, enable bacteria to colonize the epithelium of specific host organs. Functionally, the major fimbrial subunit. Interacts with alpha-sialic acid-(2-3)-beta-Gal containing receptors. It belongs to the group of Mrh (Mannose-resistant hemagglutination) fimbrial proteins. This chain is S-fimbrial protein subunit SfaA (sfaA), found in Escherichia coli O6:K15:H31 (strain 536 / UPEC).